Here is a 334-residue protein sequence, read N- to C-terminus: Probable tRNA pseudouridine synthase B (334 aa).

The active-site Nucleophile is the D82. In terms of domain architecture, PUA spans 250–325; it reads LPKIWIKDSA…IAVDVEKVFM (76 aa).

The protein belongs to the pseudouridine synthase TruB family. Type 2 subfamily.

It catalyses the reaction uridine(55) in tRNA = pseudouridine(55) in tRNA. Its function is as follows. Could be responsible for synthesis of pseudouridine from uracil-55 in the psi GC loop of transfer RNAs. This chain is Probable tRNA pseudouridine synthase B, found in Pyrococcus horikoshii (strain ATCC 700860 / DSM 12428 / JCM 9974 / NBRC 100139 / OT-3).